Consider the following 385-residue polypeptide: MVEEEGMRSLERADLAGYAARSCRSRGRMHPEEFRDDRPAFERDRDRIIHCAAFRRLEYKTQVFVNHEGDYYRTRLTHSLEVAQIGKAIARRLALNEELTEALALAHDLGHTPFGHTGEEVLNRLMEGFGGFEHNLQSFRVVDQLEERYPGFNGLNLSWEVLEGIIKHSSPYDRPTGLIEGFLPGVVPTIEAQIINFADEIAYNNHDIDDGLKSGYITIEQLNGVDLWREVWERIDTAHPGLDRERKKFQTISALIGLLIRDLITATEANLRAYGVSTLDDVRRVNRPLVTFSSAMEERNRSLKRFLFTNLYRHHKVERMRVKAERYLTQLFESYVKHPTLLPRKYQQKMDTLGRERVVCDYIAGMTDRFALDEFKRLFEPYERV.

One can recognise an HD domain in the interval 75-204 (RLTHSLEVAQ…INFADEIAYN (130 aa)).

It belongs to the dGTPase family. Type 2 subfamily.

The chain is Deoxyguanosinetriphosphate triphosphohydrolase-like protein from Geobacter sulfurreducens (strain ATCC 51573 / DSM 12127 / PCA).